A 116-amino-acid chain; its full sequence is Putative antiporter subunit mnhC2 (116 aa).

The next 3 helical transmembrane spans lie at 3 to 23 (LILLLVIGFLVFIGTYMILSL), 28 to 48 (IVIGISIYTHAGNLIIMSMGH), and 72 to 92 (AIVLTAIVIGFAMTAFLLVLV).

This sequence belongs to the CPA3 antiporters (TC 2.A.63) subunit C family. May form a heterooligomeric complex that consists of seven subunits: mnhA2, mnhB2, mnhC2, mnhD2, mnhE2, mnhF2 and mnhG2.

It localises to the cell membrane. The sequence is that of Putative antiporter subunit mnhC2 (mnhC2) from Staphylococcus haemolyticus (strain JCSC1435).